Here is a 268-residue protein sequence, read N- to C-terminus: Tryptophan synthase alpha chain (268 aa).

Residues E49 and D60 each act as proton acceptor in the active site.

Belongs to the TrpA family. As to quaternary structure, tetramer of two alpha and two beta chains.

The enzyme catalyses (1S,2R)-1-C-(indol-3-yl)glycerol 3-phosphate + L-serine = D-glyceraldehyde 3-phosphate + L-tryptophan + H2O. The protein operates within amino-acid biosynthesis; L-tryptophan biosynthesis; L-tryptophan from chorismate: step 5/5. Functionally, the alpha subunit is responsible for the aldol cleavage of indoleglycerol phosphate to indole and glyceraldehyde 3-phosphate. In Pseudomonas paraeruginosa (strain DSM 24068 / PA7) (Pseudomonas aeruginosa (strain PA7)), this protein is Tryptophan synthase alpha chain.